The following is a 413-amino-acid chain: MADDKKKQLEESKRLVELFKASSLASKKPKGHEFWDTQPVPKIDDKIIESGPIENKTLDDVRKDPLTLPPAFEWIELDCNKPEELKEIYTLLYENYVEDDDNMFRFDYSPEFLKWALQPPGFLKEWHIGVRVVESKKLVGFISGIPATIRVEGKPITMVEINFLCVHKKLREKRLAPVLIKEVTRRVNLRNIWQAAYTAGVVLPKPVAICKYWHRSIKQQKLVEVGFSAIPPKMTMASMVKLYRINDEMKHPLRPLTKEDVPSFKVLLDDYLSKYKIAPEFTTDEDVWHWFETRKDVITCYVKVDESTKKVTDAFSFYNLPSTIIGNAKHNTLKAAFSFYNVATTMSITDLVGDALVTAKKMDYDVFNCLDVFENSTFFKDLKFAVGDGDLQYYLYNYSTPTKKSSEIGLVLL.

F34, W35, F163, L164, C165, V166, R174, L175, and A176 together coordinate tetradecanoyl-CoA.

This sequence belongs to the NMT family.

It is found in the cytoplasm. The enzyme catalyses N-terminal glycyl-[protein] + tetradecanoyl-CoA = N-tetradecanoylglycyl-[protein] + CoA + H(+). Functionally, adds a myristoyl group to the N-terminal glycine residue of certain cellular proteins. The polypeptide is Glycylpeptide N-tetradecanoyltransferase (nmt) (Dictyostelium discoideum (Social amoeba)).